A 228-amino-acid chain; its full sequence is MPKYYCEYCDIYLTHSSPVGRRQHVQGRKHISAKIEYFQNLLREEGITPQNFLGFLGPRALNNILGNPMMNNMMPGNFPMHMKHNNMKHHSHYSRRSHRHHMPHGRYGRERHGHYSYSSKYHSHPMHMNSSSMSSMSGFPYNEHSGNFFSLSNSMHGNGKMGNMVIRDLVSNVNIENDLVKDNPNEERNGDSAIANQPSTMHHEEDQDDPANATGGTANNNDNVSINA.

The Matrin-type zinc-finger motif lies at 4 to 36 (YYCEYCDIYLTHSSPVGRRQHVQGRKHISAKIE). Positions 179–190 (LVKDNPNEERNG) are enriched in basic and acidic residues. The disordered stretch occupies residues 179–228 (LVKDNPNEERNGDSAIANQPSTMHHEEDQDDPANATGGTANNNDNVSINA). The segment covering 211-221 (ANATGGTANNN) has biased composition (low complexity).

This sequence belongs to the U1 small nuclear ribonucleoprotein C family. In terms of assembly, U1 snRNP is composed of the 7 core Sm proteins B/B', D1, D2, D3, E, F and G that assemble in a heptameric protein ring on the Sm site of the small nuclear RNA to form the core snRNP, and at least 3 U1 snRNP-specific proteins U1-70K, U1-A and U1-C. U1-C interacts with U1 snRNA and the 5' splice-site region of the pre-mRNA.

The protein resides in the nucleus. In terms of biological role, component of the spliceosomal U1 snRNP, which is essential for recognition of the pre-mRNA 5' splice-site and the subsequent assembly of the spliceosome. U1-C is directly involved in initial 5' splice-site recognition for both constitutive and regulated alternative splicing. The interaction with the 5' splice-site seems to precede base-pairing between the pre-mRNA and the U1 snRNA. Stimulates commitment or early (E) complex formation by stabilizing the base pairing of the 5' end of the U1 snRNA and the 5' splice-site region. The protein is U1 small nuclear ribonucleoprotein C of Plasmodium knowlesi (strain H).